The following is a 356-amino-acid chain: Glutamine synthetase nodule isozyme (356 aa).

The GS beta-grasp domain maps to 19 to 99 (IIAEYIWVGG…VICDVYTPAG (81 aa)). The region spanning 106–356 (KRHNAAKIFS…IAETTLLWKP (251 aa)) is the GS catalytic domain.

This sequence belongs to the glutamine synthetase family. In terms of assembly, homooctamer. As to expression, found at highest levels in root nodules.

The protein resides in the cytoplasm. It carries out the reaction L-glutamate + NH4(+) + ATP = L-glutamine + ADP + phosphate + H(+). The polypeptide is Glutamine synthetase nodule isozyme (GS1) (Medicago sativa (Alfalfa)).